Here is a 336-residue protein sequence, read N- to C-terminus: Pyridoxal 5'-phosphate synthase subunit PdxS (336 aa).

Asp64 lines the D-ribose 5-phosphate pocket. Lys121 serves as the catalytic Schiff-base intermediate with D-ribose 5-phosphate. Gly193 is a binding site for D-ribose 5-phosphate. Lys205 serves as a coordination point for D-glyceraldehyde 3-phosphate. Residues Gly254 and 275–276 (GS) contribute to the D-ribose 5-phosphate site.

It belongs to the PdxS/SNZ family. In the presence of PdxT, forms a dodecamer of heterodimers.

It catalyses the reaction aldehydo-D-ribose 5-phosphate + D-glyceraldehyde 3-phosphate + L-glutamine = pyridoxal 5'-phosphate + L-glutamate + phosphate + 3 H2O + H(+). It functions in the pathway cofactor biosynthesis; pyridoxal 5'-phosphate biosynthesis. Catalyzes the formation of pyridoxal 5'-phosphate from ribose 5-phosphate (RBP), glyceraldehyde 3-phosphate (G3P) and ammonia. The ammonia is provided by the PdxT subunit. Can also use ribulose 5-phosphate and dihydroxyacetone phosphate as substrates, resulting from enzyme-catalyzed isomerization of RBP and G3P, respectively. The protein is Pyridoxal 5'-phosphate synthase subunit PdxS of Pyrobaculum aerophilum (strain ATCC 51768 / DSM 7523 / JCM 9630 / CIP 104966 / NBRC 100827 / IM2).